The sequence spans 92 residues: Small ribosomal subunit protein uS19c (92 aa).

It belongs to the universal ribosomal protein uS19 family.

The protein localises to the plastid. It is found in the chloroplast. Protein S19 forms a complex with S13 that binds strongly to the 16S ribosomal RNA. This chain is Small ribosomal subunit protein uS19c, found in Gossypium barbadense (Sea Island cotton).